Consider the following 106-residue polypeptide: UPF0060 membrane protein Bphy_5052 (106 aa).

4 helical membrane-spanning segments follow: residues leucine 4–tryptophan 24, serine 30–phenylalanine 50, valine 58–aspartate 78, and proline 82–phenylalanine 102.

The protein belongs to the UPF0060 family.

The protein resides in the cell inner membrane. The polypeptide is UPF0060 membrane protein Bphy_5052 (Paraburkholderia phymatum (strain DSM 17167 / CIP 108236 / LMG 21445 / STM815) (Burkholderia phymatum)).